A 139-amino-acid chain; its full sequence is Putative nickel-responsive regulator (139 aa).

Ni(2+) is bound by residues His79, His90, His92, and Cys98.

This sequence belongs to the transcriptional regulatory CopG/NikR family. It depends on Ni(2+) as a cofactor.

Functionally, transcriptional regulator. This chain is Putative nickel-responsive regulator, found in Geobacter sp. (strain M21).